We begin with the raw amino-acid sequence, 166 residues long: Large ribosomal subunit protein uL10 (166 aa).

The protein belongs to the universal ribosomal protein uL10 family. As to quaternary structure, part of the ribosomal stalk of the 50S ribosomal subunit. The N-terminus interacts with L11 and the large rRNA to form the base of the stalk. The C-terminus forms an elongated spine to which L12 dimers bind in a sequential fashion forming a multimeric L10(L12)X complex.

In terms of biological role, forms part of the ribosomal stalk, playing a central role in the interaction of the ribosome with GTP-bound translation factors. In Stutzerimonas stutzeri (strain A1501) (Pseudomonas stutzeri), this protein is Large ribosomal subunit protein uL10.